A 152-amino-acid polypeptide reads, in one-letter code: Superoxide dismutase [Cu-Zn] 1 (152 aa).

Residues His-45, His-47, and His-62 each coordinate Cu cation. Cys-56 and Cys-145 are oxidised to a cystine. Zn(2+) contacts are provided by His-62, His-70, His-79, and Asp-82. A Cu cation-binding site is contributed by His-119.

This sequence belongs to the Cu-Zn superoxide dismutase family. In terms of assembly, homodimer. Interacts with DJ1A and CCS. Requires Cu cation as cofactor. The cofactor is Zn(2+). As to expression, expressed in leaves (at protein level). The spatial localization is regulated by miR398-mediated silencing. Mostly present in flowers, old rosette leaves and inflorescence, and, to a lower extent, in cauline leaves, stems and roots.

Its subcellular location is the cytoplasm. It localises to the cytosol. The protein localises to the nucleus. It carries out the reaction 2 superoxide + 2 H(+) = H2O2 + O2. Its function is as follows. Destroys radicals which are normally produced within the cells and which are toxic to biological systems. The polypeptide is Superoxide dismutase [Cu-Zn] 1 (CSD1) (Arabidopsis thaliana (Mouse-ear cress)).